The following is a 433-amino-acid chain: Serine--tRNA ligase (433 aa).

T235–E237 is a binding site for L-serine. An ATP-binding site is contributed by R266–E268. Residue E289 participates in L-serine binding. E353–S356 lines the ATP pocket. S388 serves as a coordination point for L-serine.

Belongs to the class-II aminoacyl-tRNA synthetase family. Type-1 seryl-tRNA synthetase subfamily. Homodimer. The tRNA molecule binds across the dimer.

It localises to the cytoplasm. The catalysed reaction is tRNA(Ser) + L-serine + ATP = L-seryl-tRNA(Ser) + AMP + diphosphate + H(+). It carries out the reaction tRNA(Sec) + L-serine + ATP = L-seryl-tRNA(Sec) + AMP + diphosphate + H(+). It participates in aminoacyl-tRNA biosynthesis; selenocysteinyl-tRNA(Sec) biosynthesis; L-seryl-tRNA(Sec) from L-serine and tRNA(Sec): step 1/1. Its function is as follows. Catalyzes the attachment of serine to tRNA(Ser). Is also able to aminoacylate tRNA(Sec) with serine, to form the misacylated tRNA L-seryl-tRNA(Sec), which will be further converted into selenocysteinyl-tRNA(Sec). This Burkholderia lata (strain ATCC 17760 / DSM 23089 / LMG 22485 / NCIMB 9086 / R18194 / 383) protein is Serine--tRNA ligase.